The sequence spans 331 residues: N-arachidonyl glycine receptor (331 aa).

Over 1–26 (MATLSNHNQLDLSNGSHPEEYKIAAL) the chain is Extracellular. Asn14 carries N-linked (GlcNAc...) asparagine glycosylation. The helical transmembrane segment at 27 to 47 (VFYSCIFLIGLFVNVTALWVF) threads the bilayer. Residues 48 to 56 (SCTTKKRTT) are Cytoplasmic-facing. Residues 57-77 (VTIYMMNVALLDLVFILSLPF) form a helical membrane-spanning segment. At 78–95 (RMFYYAKGEWPFGEYFCH) the chain is on the extracellular side. Cys94 and Cys172 are joined by a disulfide. The helical transmembrane segment at 96–116 (ILGALVVFYPSLALWLLAFIS) threads the bilayer. Topologically, residues 117 to 138 (ADRYMAIVQPKYAKELKNTGKA) are cytoplasmic. A helical membrane pass occupies residues 139–159 (VLACGGVWVMTLTTTVPLLLL). Residues 160–191 (YEDPDKASSPATCLKISDITHLKAVNVLNFTR) lie on the Extracellular side of the membrane. Asn188 is a glycosylation site (N-linked (GlcNAc...) asparagine). Residues 192 to 212 (LIFFFLIPLFIMIGCYVVIIH) form a helical membrane-spanning segment. Residues 213–236 (SLLRGQTSKLKPKVKEKSIRIIMT) lie on the Cytoplasmic side of the membrane. Residues 237–257 (LLLQVLVCFVPFHICFAVLML) traverse the membrane as a helical segment. Residues 258–268 (QGQENSYSPWG) are Extracellular-facing. Residues 269–289 (AFTTFLMNLSTCLDVVLYYIV) form a helical membrane-spanning segment. Residues 290 to 331 (SKQFQARVISVMLYRNYLRSVRRKSVRSGSLRSLSNMNSEML) lie on the Cytoplasmic side of the membrane. Ser322 carries the post-translational modification Phosphoserine.

The protein belongs to the G-protein coupled receptor 1 family. As to expression, expressed in the eye including cornea, retina, iris and ciliary epithelium (at protein level). Expressed in spleen, liver and lymphocytes with highest expression levels in intestinal intraepithelial lymphocytes.

It localises to the cell membrane. The protein resides in the cytoplasmic vesicle membrane. G protein-coupled receptor (GPCR) that plays a role in diverse physiological processes particularly within the immune and nervous systems. Becomes active when triggered by various endogenous ligands including endocannabinoid N-arachidonyl glycine (NAGly), delta-9-tetrahydrocannabinol or resolvin D2/RvD2 derived from the omega-3 fatty acid docosahexaenoic acid (DHA). Upon RvD2 binding, facilitates the resolution of inflammation, aiding in tissue repair and homeostasis. Mechanistically, RvD2 ligation initiates Galphas protein coupling, activation of cAMP-PKA signaling pathway and phosphorylation of STAT3, leading to RvD2-stimulated macrophage phagocytosis. Mediates NAGly-induced process of reorganization of actin filaments and induction of acrosomal exocytosis. Activation by N-arachidonoyl glycine (NAGly) can also induce apoptosis in macrophages. Plays a role in homeostasis of CD8+ subsets of intraepithelial lymphocytes (IELs) (CD8alphaalpha and CD8alphabeta IELs) in small intestine by supporting preferential migration of CD8alphaalpha T-cells to intraepithelial compartment over lamina propria compartment, and by mediating their reconstitution into small intestine after bone marrow transplant. Also participates in hypotensive responses, mediating reduction in intraocular and blood pressure. This is N-arachidonyl glycine receptor from Mus musculus (Mouse).